We begin with the raw amino-acid sequence, 298 residues long: NAD kinase (298 aa).

Aspartate 80 (proton acceptor) is an active-site residue. NAD(+)-binding positions include aspartate 80–glycine 81, asparagine 154–aspartate 155, arginine 182, aspartate 184, threonine 195–serine 200, alanine 219, and glutamine 253.

This sequence belongs to the NAD kinase family. The cofactor is a divalent metal cation.

It localises to the cytoplasm. It carries out the reaction NAD(+) + ATP = ADP + NADP(+) + H(+). Functionally, involved in the regulation of the intracellular balance of NAD and NADP, and is a key enzyme in the biosynthesis of NADP. Catalyzes specifically the phosphorylation on 2'-hydroxyl of the adenosine moiety of NAD to yield NADP. This chain is NAD kinase, found in Paracidovorax citrulli (strain AAC00-1) (Acidovorax citrulli).